The chain runs to 125 residues: Small ribosomal subunit protein uS12 (125 aa).

Residues 1-27 form a disordered region; it reads MPTINQLVRKGREKGEQKSTAPALKSC. Asp89 carries the 3-methylthioaspartic acid modification. A disordered region spans residues 103-125; it reads DASGVQKRNQGRSKYGTKRPKKK. Over residues 111–125 the composition is skewed to basic residues; sequence NQGRSKYGTKRPKKK.

Belongs to the universal ribosomal protein uS12 family. In terms of assembly, part of the 30S ribosomal subunit. Contacts proteins S8 and S17. May interact with IF1 in the 30S initiation complex.

Functionally, with S4 and S5 plays an important role in translational accuracy. In terms of biological role, interacts with and stabilizes bases of the 16S rRNA that are involved in tRNA selection in the A site and with the mRNA backbone. Located at the interface of the 30S and 50S subunits, it traverses the body of the 30S subunit contacting proteins on the other side and probably holding the rRNA structure together. The combined cluster of proteins S8, S12 and S17 appears to hold together the shoulder and platform of the 30S subunit. This chain is Small ribosomal subunit protein uS12, found in Syntrophomonas wolfei subsp. wolfei (strain DSM 2245B / Goettingen).